We begin with the raw amino-acid sequence, 141 residues long: Large ribosomal subunit protein uL11 (141 aa).

It belongs to the universal ribosomal protein uL11 family. Part of the ribosomal stalk of the 50S ribosomal subunit. Interacts with L10 and the large rRNA to form the base of the stalk. L10 forms an elongated spine to which L12 dimers bind in a sequential fashion forming a multimeric L10(L12)X complex. Post-translationally, one or more lysine residues are methylated.

Functionally, forms part of the ribosomal stalk which helps the ribosome interact with GTP-bound translation factors. In Ruminiclostridium cellulolyticum (strain ATCC 35319 / DSM 5812 / JCM 6584 / H10) (Clostridium cellulolyticum), this protein is Large ribosomal subunit protein uL11.